A 1302-amino-acid polypeptide reads, in one-letter code: Regulator of telomere elongation helicase 1 (1302 aa).

The Helicase ATP-binding domain occupies 7-297 (NGVTVDFPFQ…TKTAQQGEPH (291 aa)). An ATP-binding site is contributed by 42–49 (SHTGTGKT). Residues cysteine 146, cysteine 164, cysteine 173, and cysteine 208 each coordinate [4Fe-4S] cluster. Positions 152 to 168 (KKQESNHIQIHLCRKKV) match the Nuclear localization signal motif. The DEAH box signature appears at 251–254 (DEAH). Over residues 758-767 (PAPAPRATAP) the composition is skewed to low complexity. Residues 758-819 (PAPAPRATAP…AAGDPESSLC (62 aa)) are disordered. The span at 770–780 (REGEDAVREVK) shows a compositional bias: basic and acidic residues. Residues 873-879 (PRGGRKK) carry the Nuclear localization signal motif. Disordered stretches follow at residues 981–1006 (RPEHSIPRRQPAQPVLDPTGRTAPDP), 1019–1058 (DPREHLNQGRPHLSPRPPPTGDPGSHPQWRSGVPRAGKQG), 1134–1153 (CTDLTGRPYPGMERPGPQEE), and 1160–1234 (VLTH…QAAG). The span at 1178 to 1187 (KTQSKISSLL) shows a compositional bias: polar residues. A PIP-box motif is present at residues 1180 to 1187 (QSKISSLL).

It belongs to the helicase family. RAD3/XPD subfamily. In terms of assembly, interacts with TERF1. Interacts (via PIP-box) with PCNA; the interaction is direct and essential for suppressing telomere fragility. Interacts with MMS19; the interaction mediates the association of RTEL1 with the cytosolic iron-sulfur protein assembly (CIA) complex.

It localises to the nucleus. It catalyses the reaction ATP + H2O = ADP + phosphate + H(+). Its function is as follows. A probable ATP-dependent DNA helicase implicated in telomere-length regulation, DNA repair and the maintenance of genomic stability. Acts as an anti-recombinase to counteract toxic recombination and limit crossover during meiosis. Regulates meiotic recombination and crossover homeostasis by physically dissociating strand invasion events and thereby promotes noncrossover repair by meiotic synthesis dependent strand annealing (SDSA) as well as disassembly of D loop recombination intermediates. Also disassembles T loops and prevents telomere fragility by counteracting telomeric G4-DNA structures, which together ensure the dynamics and stability of the telomere. In Pongo abelii (Sumatran orangutan), this protein is Regulator of telomere elongation helicase 1.